The primary structure comprises 453 residues: Ribulose bisphosphate carboxylase large chain (453 aa).

Residues 1–2 constitute a propeptide that is removed on maturation; sequence MS. Pro3 carries the post-translational modification N-acetylproline. N6,N6,N6-trimethyllysine is present on Lys14. Residues Asn123 and Thr173 each contribute to the substrate site. Lys175 serves as the catalytic Proton acceptor. Lys177 contributes to the substrate binding site. Lys201, Asp203, and Glu204 together coordinate Mg(2+). Lys201 carries the post-translational modification N6-carboxylysine. The active-site Proton acceptor is the His294. Residues Arg295, His327, and Ser379 each coordinate substrate.

Belongs to the RuBisCO large chain family. Type I subfamily. As to quaternary structure, heterohexadecamer of 8 large chains and 8 small chains; disulfide-linked. The disulfide link is formed within the large subunit homodimers. It depends on Mg(2+) as a cofactor. In terms of processing, the disulfide bond which can form in the large chain dimeric partners within the hexadecamer appears to be associated with oxidative stress and protein turnover.

Its subcellular location is the plastid. It localises to the chloroplast. The enzyme catalyses 2 (2R)-3-phosphoglycerate + 2 H(+) = D-ribulose 1,5-bisphosphate + CO2 + H2O. The catalysed reaction is D-ribulose 1,5-bisphosphate + O2 = 2-phosphoglycolate + (2R)-3-phosphoglycerate + 2 H(+). RuBisCO catalyzes two reactions: the carboxylation of D-ribulose 1,5-bisphosphate, the primary event in carbon dioxide fixation, as well as the oxidative fragmentation of the pentose substrate in the photorespiration process. Both reactions occur simultaneously and in competition at the same active site. This is Ribulose bisphosphate carboxylase large chain from Galium palustre (Common marsh bedstraw).